A 46-amino-acid chain; its full sequence is Aspartate aminotransferase 1 (46 aa).

Belongs to the class-I pyridoxal-phosphate-dependent aminotransferase family. As to quaternary structure, homodimer. Requires pyridoxal 5'-phosphate as cofactor.

It catalyses the reaction L-aspartate + 2-oxoglutarate = oxaloacetate + L-glutamate. Its function is as follows. Important for the metabolism of amino acids and Krebs-cycle related organic acids. In plants, it is involved in nitrogen metabolism and in aspects of carbon and energy metabolism. The protein is Aspartate aminotransferase 1 of Pseudotsuga menziesii (Douglas-fir).